A 314-amino-acid chain; its full sequence is 2,3-dihydroxyphenylpropionate/2,3-dihydroxicinnamic acid 1,2-dioxygenase 1 (314 aa).

H115 functions as the Proton donor in the catalytic mechanism. H179 functions as the Proton acceptor in the catalytic mechanism.

The protein belongs to the LigB/MhpB extradiol dioxygenase family. As to quaternary structure, homotetramer. Fe(2+) serves as cofactor.

It carries out the reaction 3-(2,3-dihydroxyphenyl)propanoate + O2 = (2Z,4E)-2-hydroxy-6-oxonona-2,4-dienedioate + H(+). It catalyses the reaction (2E)-3-(2,3-dihydroxyphenyl)prop-2-enoate + O2 = (2Z,4E,7E)-2-hydroxy-6-oxonona-2,4,7-trienedioate + H(+). The protein operates within aromatic compound metabolism; 3-phenylpropanoate degradation. Its function is as follows. Catalyzes the non-heme iron(II)-dependent oxidative cleavage of 2,3-dihydroxyphenylpropionic acid and 2,3-dihydroxicinnamic acid into 2-hydroxy-6-ketononadienedioate and 2-hydroxy-6-ketononatrienedioate, respectively. This chain is 2,3-dihydroxyphenylpropionate/2,3-dihydroxicinnamic acid 1,2-dioxygenase 1, found in Pseudomonas putida (Arthrobacter siderocapsulatus).